Here is a 503-residue protein sequence, read N- to C-terminus: Maturase K (503 aa).

It belongs to the intron maturase 2 family. MatK subfamily.

It localises to the plastid. Its subcellular location is the chloroplast. Functionally, usually encoded in the trnK tRNA gene intron. Probably assists in splicing its own and other chloroplast group II introns. This is Maturase K from Syzygium australe (Brush cherry).